A 483-amino-acid chain; its full sequence is Pre-glycoprotein polyprotein GP complex (483 aa).

The N-myristoyl glycine; by host moiety is linked to residue Gly-2. Over 2 to 17 (GQFISFMQEIPIFLQE) the chain is Extracellular. A helical transmembrane segment spans residues 18-32 (ALNIALVAVSLICIV). Residue Lys-33 is a topological domain, cytoplasmic. A helical membrane pass occupies residues 34-53 (GLVNLYRCGLFQLMVFLVLA). Extracellular segments follow at residues 54-58 (GRSCS) and 59-422 (EETF…TLVD). Cys-57 serves as a coordination point for Zn(2+). Residues Asn-83 and Asn-95 are each glycosylated (N-linked (GlcNAc...) asparagine; by host). Intrachain disulfides connect Cys-92/Cys-224, Cys-134/Cys-162, Cys-205/Cys-211, Cys-269/Cys-282, Cys-291/Cys-300, and Cys-354/Cys-375. Residues Asn-164 and Asn-176 are each glycosylated (N-linked (GlcNAc...) asparagine; by host). Residues Asn-355, Asn-363, Asn-380, and Asn-385 are each glycosylated (N-linked (GlcNAc...) asparagine; by host). A helical membrane pass occupies residues 423-443 (ICFWSTVFFTSTLFLHLIGFP). Residues 444-483 (THEHIRGEGCPLPHRLNSMGGCRCGKYLPLKKPTIWHRRH) lie on the Cytoplasmic side of the membrane. Zn(2+) is bound by residues His-445, His-447, Cys-453, His-457, Cys-465, Cys-467, and His-483.

Belongs to the arenaviridae GPC protein family. As to quaternary structure, homotetramer; disulfide-linked. In terms of assembly, homotetramer. GP2 homotetramers bind through ionic interactions with GP1 homotetramers to form the GP complex together with the stable signal peptide. The GP-C polyprotein interacts with the host protease MBTPS1/SKI-1 resulting in the polyprotein processing. Specific enzymatic cleavages in vivo yield mature proteins. GP-C polyprotein is cleaved in the endoplasmic reticulum by the host protease MBTPS1. Only cleaved glycoprotein is incorporated into virions. In terms of processing, the SSP remains stably associated with the GP complex following cleavage by signal peptidase and plays crucial roles in the trafficking of GP through the secretory pathway. Post-translationally, myristoylation is necessary for GP2-mediated fusion activity.

It is found in the virion membrane. Its subcellular location is the host endoplasmic reticulum membrane. The protein resides in the host Golgi apparatus membrane. The protein localises to the host cell membrane. In terms of biological role, class I viral fusion protein that directs fusion of viral and host endosomal membranes, leading to delivery of the nucleocapsid into the cytoplasm. Membrane fusion is mediated by irreversible conformational changes induced upon acidification in the endosome. Stable signal peptide (SSP): cleaved and functions as a signal peptide. In addition, it is also retained as the third component of the GP complex. The SSP is required for efficient glycoprotein expression, post-translational maturation cleavage of GP1 and GP2, glycoprotein transport to the cell surface plasma membrane, formation of infectious virus particles, and acid pH-dependent glycoprotein-mediated cell fusion. Its function is as follows. Interacts with the host receptor. The sequence is that of Pre-glycoprotein polyprotein GP complex from Tacaribe virus (strain V5) (TCRV).